A 73-amino-acid polypeptide reads, in one-letter code: Large ribosomal subunit protein bL31 (73 aa).

4 residues coordinate Zn(2+): Cys-16, Cys-18, Cys-37, and Cys-40.

Belongs to the bacterial ribosomal protein bL31 family. Type A subfamily. In terms of assembly, part of the 50S ribosomal subunit. Zn(2+) serves as cofactor.

Binds the 23S rRNA. This chain is Large ribosomal subunit protein bL31, found in Pseudomonas syringae pv. syringae (strain B728a).